A 183-amino-acid chain; its full sequence is Large ribosomal subunit protein mL43 (183 aa).

2 disordered regions span residues 120–144 and 162–183; these read HTDN…TGCG and PGAL…AQAE. A compositionally biased stretch (polar residues) spans 122–139; it reads DNPSIQGQWTPSPTNGLP. Residues 162-172 show a composition bias toward basic and acidic residues; sequence PGALDRERDRI.

The protein belongs to the mitochondrion-specific ribosomal protein mL43 family. Component of the mitochondrial ribosome large subunit (39S) which comprises a 16S rRNA and about 50 distinct proteins. Ubiquitous with the highest levels in the liver, heart and kidneys. The skeletal muscle, brain and testis showed lower but detectable expression. Expression is coregulated with TWNK.

It localises to the mitochondrion. This chain is Large ribosomal subunit protein mL43 (Mrpl43), found in Mus musculus (Mouse).